The chain runs to 440 residues: Thymidine phosphorylase (440 aa).

This sequence belongs to the thymidine/pyrimidine-nucleoside phosphorylase family. As to quaternary structure, homodimer.

It carries out the reaction thymidine + phosphate = 2-deoxy-alpha-D-ribose 1-phosphate + thymine. Its pathway is pyrimidine metabolism; dTMP biosynthesis via salvage pathway; dTMP from thymine: step 1/2. Its function is as follows. The enzymes which catalyze the reversible phosphorolysis of pyrimidine nucleosides are involved in the degradation of these compounds and in their utilization as carbon and energy sources, or in the rescue of pyrimidine bases for nucleotide synthesis. The protein is Thymidine phosphorylase of Shigella boydii serotype 4 (strain Sb227).